We begin with the raw amino-acid sequence, 464 residues long: Non-neuronal cytoplasmic intermediate filament protein (464 aa).

A compositionally biased stretch (polar residues) spans 1–14; the sequence is MSTQTKKVTRTIIT. A disordered region spans residues 1 to 59; that stretch reads MSTQTKKVTRTIITSSSGGGGGGGGGRASYSSSGRFSGGGGRMRAGGVTSRRSVGSSYS. The interval 1–101 is head; the sequence is MSTQTKKVTR…RMTRAHEKQE (101 aa). Positions 17–27 are enriched in gly residues; it reads SGGGGGGGGGR. Positions 45-59 are enriched in low complexity; sequence AGGVTSRRSVGSSYS. An IF rod domain is found at 98-413; the sequence is EKQELSHLND…KLLEGEEIRL (316 aa). A coil 1A region spans residues 102–133; the sequence is LSHLNDRFASYIDKVRYLQERNSKLEAQIKIQ. The linker 1 stretch occupies residues 134-144; it reads ESREAPNIKDL. Residues 145 to 237 form a coil 1B region; the sequence is YEKELRDLRA…FLKRVHDEEI (93 aa). Residues 238 to 264 form a linker 2 region; sequence RQLQDQLNESLTIVEVDSRAASTFAPG. Positions 265–413 are coil 2; that stretch reads PDLTEALREI…KLLEGEEIRL (149 aa). The tract at residues 414-464 is tail; the sequence is FGESKEGVQQTSSSSSSSYQYSMKSGSGGGGGGSSSGKQQVTVSVSSGEEK. Residues 415-464 form a disordered region; the sequence is GESKEGVQQTSSSSSSSYQYSMKSGSGGGGGGSSSGKQQVTVSVSSGEEK. Over residues 420–438 the composition is skewed to low complexity; the sequence is GVQQTSSSSSSSYQYSMKS. Positions 439–448 are enriched in gly residues; the sequence is GSGGGGGGSS. The segment covering 449 to 464 has biased composition (low complexity); sequence SGKQQVTVSVSSGEEK.

Belongs to the intermediate filament family. As to quaternary structure, can form homopolymers.

It localises to the cytoplasm. This is Non-neuronal cytoplasmic intermediate filament protein from Branchiostoma lanceolatum (Common lancelet).